Here is a 120-residue protein sequence, read N- to C-terminus: Transcription elongation factor 1 homolog (120 aa).

Residues Cys-25, Cys-28, Cys-49, and Cys-52 each contribute to the Zn(2+) site. Positions 84–110 (EDDVVQEEEEEVEEEEEEEEEEDDEDD) are enriched in acidic residues. The tract at residues 84-120 (EDDVVQEEEEEVEEEEEEEEEEDDEDDHVSVKRKYNF) is disordered.

It belongs to the ELOF1 family.

The protein localises to the nucleus. In terms of biological role, transcription elongation factor implicated in the maintenance of proper chromatin structure in actively transcribed regions. The polypeptide is Transcription elongation factor 1 homolog (Arabidopsis thaliana (Mouse-ear cress)).